Consider the following 431-residue polypeptide: COBRA-like protein 4 (431 aa).

The signal sequence occupies residues 1–20; sequence MRLLFSFCFFFFMIIFTATA. N-linked (GlcNAc...) asparagine glycosylation is found at N29, N154, N162, N201, N226, N306, N321, and N340. A lipid anchor (GPI-anchor amidated asparagine) is attached at N414. The propeptide at 415-431 is removed in mature form; that stretch reads FASFSLTILLLLFISIW.

The protein belongs to the COBRA family. As to expression, expressed in roots, stems, leaves, flowers and siliques.

It localises to the cell membrane. The polypeptide is COBRA-like protein 4 (COBL4) (Arabidopsis thaliana (Mouse-ear cress)).